The following is a 271-amino-acid chain: Regulatory protein RecX (271 aa).

It belongs to the RecX family.

The protein localises to the cytoplasm. Functionally, modulates RecA activity. The sequence is that of Regulatory protein RecX from Lactobacillus gasseri (strain ATCC 33323 / DSM 20243 / BCRC 14619 / CIP 102991 / JCM 1131 / KCTC 3163 / NCIMB 11718 / NCTC 13722 / AM63).